The primary structure comprises 430 residues: MVFEEFISTELKKEKKAFTEEFKEEKEINDNSNLKNDLLKEELQEKARIAELESRILKLELEKKELERENLQLMKENEILRRELDRMRVPPLIVGTVVDKVGERKVVVKSSTGPSFLVNVSHFVNPDDLAPGKRVCLNQQTLTVVDVLPENKDYRAKAMEVDERPNVRYEDIGGLEKQMQEIREVVELPLKHPELFEKVGIEPPKGILLYGPPGTGKTLLAKAVATETNATFIRVVGSELVKKFIGEGASLVKDIFKLAKEKAPSIIFIDEIDAIAAKRTDALTGGDREVQRTLMQLLAEMDGFDARGDVKIIGATNRPDILDPAILRPGRFDRIIEVPAPDEKGRLEILKIHTRKMNLAEDVNLEEIAKMTEGCVGAELKAICTEAGMNAIRELRDYVTMDDFRKAVEKIMEKKKVKVKEPAHLDVLYR.

Positions 9–89 (TELKKEKKAF…LRRELDRMRV (81 aa)) form a coiled coil. Residues 214–219 (GTGKTL) and H353 contribute to the ATP site. Residues 428-430 (LYR) are docks into pockets in the proteasome alpha-ring to cause gate opening.

Belongs to the AAA ATPase family. Homohexamer. The hexameric complex has a two-ring architecture resembling a top hat that caps the 20S proteasome core at one or both ends. Alone, can form a complex composed of two stacked hexameric rings in vitro. Upon ATP-binding, the C-terminus of PAN interacts with the alpha-rings of the proteasome core by binding to the intersubunit pockets.

Its subcellular location is the cytoplasm. With respect to regulation, ATPase activity is inhibited by EDTA, N-ethylmaleimide (NEM) and p-chloromercuriphenyl-sulfonic acid (PCMS) in vitro. Functionally, ATPase which is responsible for recognizing, binding, unfolding and translocation of substrate proteins into the archaeal 20S proteasome core particle. Is essential for opening the gate of the 20S proteasome via an interaction with its C-terminus, thereby allowing substrate entry and access to the site of proteolysis. Thus, the C-termini of the proteasomal ATPase function like a 'key in a lock' to induce gate opening and therefore regulate proteolysis. Unfolding activity requires energy from ATP hydrolysis, whereas ATP binding alone promotes ATPase-20S proteasome association which triggers gate opening, and supports translocation of unfolded substrates. In addition to ATP, is able to cleave other nucleotide triphosphates such as CTP, GTP and UTP, but hydrolysis of these other nucleotides is less effective in promoting proteolysis than ATP. Moreover, PAN by itself can function as a chaperone in vitro. This chain is Proteasome-activating nucleotidase, found in Methanocaldococcus jannaschii (strain ATCC 43067 / DSM 2661 / JAL-1 / JCM 10045 / NBRC 100440) (Methanococcus jannaschii).